The chain runs to 539 residues: Protoporphyrinogen oxidase (539 aa).

Residues 18–23 (GGGVSG), 43–44 (ES), Trp51, 70–73 (GPRT), Val300, and 521–523 (PGV) contribute to the FAD site.

Belongs to the protoporphyrinogen/coproporphyrinogen oxidase family. Protoporphyrinogen oxidase subfamily. The cofactor is FAD.

The protein resides in the mitochondrion inner membrane. It catalyses the reaction protoporphyrinogen IX + 3 O2 = protoporphyrin IX + 3 H2O2. It participates in porphyrin-containing compound metabolism; protoporphyrin-IX biosynthesis; protoporphyrin-IX from protoporphyrinogen-IX: step 1/1. In terms of biological role, catalyzes the 6-electron oxidation of protoporphyrinogen-IX to form protoporphyrin-IX. This chain is Protoporphyrinogen oxidase, found in Saccharomyces cerevisiae (strain ATCC 204508 / S288c) (Baker's yeast).